The primary structure comprises 68 residues: Gallinacin-10 (68 aa).

An N-terminal signal peptide occupies residues 1-19 (MKILCLLFAVLLFLFQAAP). Residues 20–25 (GSADPL) constitute a propeptide that is removed on maturation. Cystine bridges form between C32–C61, C39–C54, and C44–C62.

This sequence belongs to the beta-defensin family. Strong expression in the testis, liver, gall bladder and kidney. Also expressed in the ovary and male and female reproductive tracts. Expressed in the ovarian stroma and the theca and granulosa layers of the ovarian follicle.

The protein localises to the secreted. Its subcellular location is the cytoplasmic granule. Has bactericidal activity. The protein is Gallinacin-10 (GAL10) of Gallus gallus (Chicken).